A 232-amino-acid polypeptide reads, in one-letter code: Vesicle transport through interaction with t-SNAREs homolog 1B (232 aa).

At A2 the chain carries N-acetylalanine. Interaction with CLINT1 regions lie at residues 2–23 (AASA…GLLE) and 69–73 (APLTF). Over 2 to 208 (AASAASSEHF…SRKVITNKLL (207 aa)) the chain is Cytoplasmic. Residues 36 to 98 (AGTEEKKKLV…AKLHREVRST (63 aa)) are a coiled coil. R107 carries the post-translational modification Omega-N-methylarginine. Residue S138 is modified to Phosphoserine. A coiled-coil region spans residues 160–201 (GTEIIEELGEQRDQLERTKSRLVNTNENLSKSRKILRSMSRK). Residues 209 to 229 (LSVIILLELAILVGLVYYKFF) traverse the membrane as a helical; Anchor for type IV membrane protein segment. The Vesicular segment spans residues 230–232 (RHH).

The protein belongs to the VTI1 family. In terms of assembly, forms a SNARE complex with STX7, STX8 and VAMP8 which functions in the homotypic fusion of late endosomes. Component of the SNARE complex composed of STX7, STX8, VAMP7 and VIT1B that is required for heterotypic fusion of late endosomes with lysosomes. May interact with STX17. Interacts with CLINT1. As to expression, broadly expressed.

The protein resides in the early endosome membrane. It is found in the late endosome membrane. The protein localises to the lysosome membrane. Its subcellular location is the cytoplasmic granule. It localises to the recycling endosome membrane. In terms of biological role, V-SNARE that mediates vesicle transport pathways through interactions with t-SNAREs on the target membrane. These interactions are proposed to mediate aspects of the specificity of vesicle trafficking and to promote fusion of the lipid bilayers. The chain is Vesicle transport through interaction with t-SNAREs homolog 1B (Vti1b) from Mus musculus (Mouse).